Here is a 232-residue protein sequence, read N- to C-terminus: Lipoprotein-releasing system ATP-binding protein LolD 1 (232 aa).

Positions 11-231 (VYLHDVKRQY…SIQDGLVVEL (221 aa)) constitute an ABC transporter domain. 47–54 (APSGAGKS) is a binding site for ATP.

The protein belongs to the ABC transporter superfamily. Lipoprotein translocase (TC 3.A.1.125) family. In terms of assembly, the complex is composed of two ATP-binding proteins (LolD) and two transmembrane proteins (LolC and LolE).

The protein localises to the cell inner membrane. Its function is as follows. Part of the ABC transporter complex LolCDE involved in the translocation of mature outer membrane-directed lipoproteins, from the inner membrane to the periplasmic chaperone, LolA. Responsible for the formation of the LolA-lipoprotein complex in an ATP-dependent manner. The chain is Lipoprotein-releasing system ATP-binding protein LolD 1 from Rhodopseudomonas palustris (strain BisB18).